The primary structure comprises 99 residues: Integration host factor subunit alpha (99 aa).

This sequence belongs to the bacterial histone-like protein family. As to quaternary structure, heterodimer of an alpha and a beta chain.

In terms of biological role, this protein is one of the two subunits of integration host factor, a specific DNA-binding protein that functions in genetic recombination as well as in transcriptional and translational control. The sequence is that of Integration host factor subunit alpha from Enterobacter sp. (strain 638).